The sequence spans 349 residues: Phosphoribosylformylglycinamidine cyclo-ligase (349 aa).

Belongs to the AIR synthase family.

The protein resides in the cytoplasm. The enzyme catalyses 2-formamido-N(1)-(5-O-phospho-beta-D-ribosyl)acetamidine + ATP = 5-amino-1-(5-phospho-beta-D-ribosyl)imidazole + ADP + phosphate + H(+). Its pathway is purine metabolism; IMP biosynthesis via de novo pathway; 5-amino-1-(5-phospho-D-ribosyl)imidazole from N(2)-formyl-N(1)-(5-phospho-D-ribosyl)glycinamide: step 2/2. The protein is Phosphoribosylformylglycinamidine cyclo-ligase of Methanococcus maripaludis (strain C5 / ATCC BAA-1333).